Consider the following 109-residue polypeptide: Flagellar hook-basal body complex protein FliE (109 aa).

The disordered stretch occupies residues 1–38 (MQAIHNDKSLLSPFSELNTDNRTKREESGSTFKEQKGG). A compositionally biased stretch (basic and acidic residues) spans 19–38 (TDNRTKREESGSTFKEQKGG).

Belongs to the FliE family.

The protein localises to the bacterial flagellum basal body. The protein is Flagellar hook-basal body complex protein FliE of Helicobacter pylori (strain P12).